Here is a 464-residue protein sequence, read N- to C-terminus: ATP-dependent protease ATPase subunit HslU (464 aa).

ATP-binding positions include Ile19, 61 to 66 (GVGKTE), Asp277, Glu342, and Arg414.

The protein belongs to the ClpX chaperone family. HslU subfamily. As to quaternary structure, a double ring-shaped homohexamer of HslV is capped on each side by a ring-shaped HslU homohexamer. The assembly of the HslU/HslV complex is dependent on binding of ATP.

The protein resides in the cytoplasm. ATPase subunit of a proteasome-like degradation complex; this subunit has chaperone activity. The binding of ATP and its subsequent hydrolysis by HslU are essential for unfolding of protein substrates subsequently hydrolyzed by HslV. HslU recognizes the N-terminal part of its protein substrates and unfolds these before they are guided to HslV for hydrolysis. The chain is ATP-dependent protease ATPase subunit HslU from Lactobacillus johnsonii (strain CNCM I-12250 / La1 / NCC 533).